Here is a 399-residue protein sequence, read N- to C-terminus: CCA-adding enzyme (399 aa).

Gly32 and Arg35 together coordinate ATP. Residues Gly32 and Arg35 each coordinate CTP. The Mg(2+) site is built by Asp45 and Asp47. 5 residues coordinate ATP: Arg116, Asp159, Arg162, Arg165, and Arg168. 5 residues coordinate CTP: Arg116, Asp159, Arg162, Arg165, and Arg168.

It belongs to the tRNA nucleotidyltransferase/poly(A) polymerase family. Bacterial CCA-adding enzyme type 3 subfamily. As to quaternary structure, homodimer. It depends on Mg(2+) as a cofactor.

The enzyme catalyses a tRNA precursor + 2 CTP + ATP = a tRNA with a 3' CCA end + 3 diphosphate. It catalyses the reaction a tRNA with a 3' CCA end + 2 CTP + ATP = a tRNA with a 3' CCACCA end + 3 diphosphate. Its function is as follows. Catalyzes the addition and repair of the essential 3'-terminal CCA sequence in tRNAs without using a nucleic acid template. Adds these three nucleotides in the order of C, C, and A to the tRNA nucleotide-73, using CTP and ATP as substrates and producing inorganic pyrophosphate. tRNA 3'-terminal CCA addition is required both for tRNA processing and repair. Also involved in tRNA surveillance by mediating tandem CCA addition to generate a CCACCA at the 3' terminus of unstable tRNAs. While stable tRNAs receive only 3'-terminal CCA, unstable tRNAs are marked with CCACCA and rapidly degraded. The polypeptide is CCA-adding enzyme (Streptococcus gordonii (strain Challis / ATCC 35105 / BCRC 15272 / CH1 / DL1 / V288)).